Consider the following 399-residue polypeptide: MSRAIVLVLDSFGIGSAPDADKFGDEGADTFGHIAEYRYQHGQPLQLPNLTRLGLAEAHKEATGTYAKGFHEVETHGAYACAAELSSGKDTPSGHWELMGVPVHFEWGYFQDKENSFPNELLAQILKACELDGYLGNCHASGTEILKQLGEQHIRSSYPIFYTSADSVFQIAAHEEHFGLERLYQVCEKVRALIEPYNIGRVIARPFVGDKADNFERTANRKDYSVLPPKPTVLDKLQNKGGKVIAIGKISDIFAGQGVSESVKASGLNGLLTATLNAMEKAPENTLIFTNLVDFDTLYGHRRDIDGYARELETFDQWLPVIESAMTPDDVLVLTADHGCDPTWQGTDHTRELIPLLLSGQNVQAGNRGKRHSFADLGQTLCRLFDLPAMEEGKAIKLS.

Asp-10, Asp-296, His-301, Asp-337, His-338, and His-349 together coordinate Mn(2+).

Belongs to the phosphopentomutase family. Requires Mn(2+) as cofactor.

The protein resides in the cytoplasm. It carries out the reaction 2-deoxy-alpha-D-ribose 1-phosphate = 2-deoxy-D-ribose 5-phosphate. The catalysed reaction is alpha-D-ribose 1-phosphate = D-ribose 5-phosphate. Its pathway is carbohydrate degradation; 2-deoxy-D-ribose 1-phosphate degradation; D-glyceraldehyde 3-phosphate and acetaldehyde from 2-deoxy-alpha-D-ribose 1-phosphate: step 1/2. Its function is as follows. Isomerase that catalyzes the conversion of deoxy-ribose 1-phosphate (dRib-1-P) and ribose 1-phosphate (Rib-1-P) to deoxy-ribose 5-phosphate (dRib-5-P) and ribose 5-phosphate (Rib-5-P), respectively. This Idiomarina loihiensis (strain ATCC BAA-735 / DSM 15497 / L2-TR) protein is Phosphopentomutase.